The sequence spans 507 residues: Tryptophan aminotransferase-related protein 2 (507 aa).

Positions 91 to 135 are disordered; that stretch reads PPPHHHHHDAGLATRSSDAAVHRRARTASSMAPSTGKPAVTTDSV. Pyridoxal 5'-phosphate is bound by residues tyrosine 169, 211–212, asparagine 282, 304–307, 327–330, and arginine 338; these read ST, DLAY, and TVSK. Lysine 330 carries the N6-(pyridoxal phosphate)lysine modification.

The protein belongs to the alliinase family. It depends on pyridoxal 5'-phosphate as a cofactor. Widely expressed.

The catalysed reaction is L-tryptophan + 2-oxoglutarate = indole-3-pyruvate + L-glutamate. Its pathway is plant hormone metabolism; auxin biosynthesis. Its function is as follows. Probable tryptophan aminotransferase involved in auxin (IAA) biosynthesis. Required for auxin production to initiate multiple change in growth in response to environmental and developmental cues. Functions upstream of YUCCA1 in auxin biosynthesis. Required for polar auxin transport. The chain is Tryptophan aminotransferase-related protein 2 from Oryza sativa subsp. japonica (Rice).